Consider the following 72-residue polypeptide: Translation initiation factor IF-1 (72 aa).

Residues 1–72 form the S1-like domain; that stretch reads MSKEDVIEVE…TRGRITWRKK (72 aa).

The protein belongs to the IF-1 family. In terms of assembly, component of the 30S ribosomal translation pre-initiation complex which assembles on the 30S ribosome in the order IF-2 and IF-3, IF-1 and N-formylmethionyl-tRNA(fMet); mRNA recruitment can occur at any time during PIC assembly.

Its subcellular location is the cytoplasm. One of the essential components for the initiation of protein synthesis. Stabilizes the binding of IF-2 and IF-3 on the 30S subunit to which N-formylmethionyl-tRNA(fMet) subsequently binds. Helps modulate mRNA selection, yielding the 30S pre-initiation complex (PIC). Upon addition of the 50S ribosomal subunit IF-1, IF-2 and IF-3 are released leaving the mature 70S translation initiation complex. In Alkaliphilus metalliredigens (strain QYMF), this protein is Translation initiation factor IF-1.